The following is a 118-amino-acid chain: Myotrophin (118 aa).

Cys-2 carries the N-acetylcysteine modification. An ANK 1 repeat occupies 2–30; that stretch reads CDKEFMWALKNGDLDEVKDYVAKGEDVNR. Residues Lys-4, Lys-11, and Lys-24 each carry the N6-acetyllysine modification. Thr-31 carries the phosphothreonine modification. ANK repeat units follow at residues 34–66 and 67–99; these read GGRK…APDK and HHIT…VKGP.

The protein belongs to the myotrophin family. Interacts with RELA. Interacts with the heterodimer formed by CAPZA1 and CAPZB.

It is found in the cytoplasm. It localises to the nucleus. The protein resides in the perinuclear region. Promotes dimerization of NF-kappa-B subunits and regulates NF-kappa-B transcription factor activity. Promotes growth of cardiomyocytes, but not cardiomyocyte proliferation. Promotes cardiac muscle hypertrophy. Plays a role in the regulation of the growth of actin filaments. Inhibits the activity of the F-actin-capping protein complex formed by the CAPZA1 and CAPZB heterodimer. The polypeptide is Myotrophin (MTPN) (Bos taurus (Bovine)).